A 281-amino-acid chain; its full sequence is Undecaprenyl-diphosphatase (281 aa).

7 consecutive transmembrane segments (helical) span residues 4-24 (ILLL…FLPI), 46-63 (AFEV…CWEF), 83-103 (FVLN…LFGK), 108-128 (VLFS…IIFW), 187-207 (AVAT…ATAY), 222-242 (EFTL…FVCV), and 257-277 (FAWY…TGLI).

The protein belongs to the UppP family.

It is found in the cell inner membrane. It carries out the reaction di-trans,octa-cis-undecaprenyl diphosphate + H2O = di-trans,octa-cis-undecaprenyl phosphate + phosphate + H(+). In terms of biological role, catalyzes the dephosphorylation of undecaprenyl diphosphate (UPP). Confers resistance to bacitracin. This is Undecaprenyl-diphosphatase from Polynucleobacter necessarius subsp. necessarius (strain STIR1).